A 200-amino-acid polypeptide reads, in one-letter code: Imidazoleglycerol-phosphate dehydratase (200 aa).

Belongs to the imidazoleglycerol-phosphate dehydratase family.

The protein resides in the cytoplasm. It carries out the reaction D-erythro-1-(imidazol-4-yl)glycerol 3-phosphate = 3-(imidazol-4-yl)-2-oxopropyl phosphate + H2O. Its pathway is amino-acid biosynthesis; L-histidine biosynthesis; L-histidine from 5-phospho-alpha-D-ribose 1-diphosphate: step 6/9. The chain is Imidazoleglycerol-phosphate dehydratase from Prosthecochloris aestuarii (strain DSM 271 / SK 413).